We begin with the raw amino-acid sequence, 2174 residues long: Spectinabilin polyketide synthase system protein NorB (2174 aa).

Residues 34–459 (REPVAVVAMG…GTNAHVILEQ (426 aa)) enclose the Ketosynthase family 3 (KS3) domain. Active-site for beta-ketoacyl synthase activity residues include Cys206, His341, and His381. The region spanning 567-888 (FLFSGQGSQR…AAVSRAFVQG (322 aa)) is the Malonyl-CoA:ACP transacylase (MAT) domain. Residues 938 to 1060 (HPLLGACLEL…GQLAPEAAAP (123 aa)) form an N-terminal hotdog fold region. Residues 938 to 1212 (HPLLGACLEL…TRPITAGQLR (275 aa)) enclose the PKS/mFAS DH domain. Residue His970 is the Proton acceptor; for dehydratase activity of the active site. A disordered region spans residues 1056–1075 (EAAAPPAAPGEDWPPPGAEP). Pro residues predominate over residues 1061 to 1074 (PAAPGEDWPPPGAE). The interval 1073-1212 (AEPVPLEGFY…TRPITAGQLR (140 aa)) is C-terminal hotdog fold. Asp1134 functions as the Proton donor; for dehydratase activity in the catalytic mechanism. The region spanning 1424 to 1726 (GTVDDLVLAP…QARNVGKLVL (303 aa)) is the Enoyl reductase (ER) domain. The region spanning 1736-1915 (GTILVTGGYG…ATALAWGMWA (180 aa)) is the Ketoreductase (KR) domain. The 76-residue stretch at 2017-2092 (PAVRELVRGQ…ALTDAIEARL (76 aa)) folds into the Carrier domain. Ser2052 is modified (O-(pantetheine 4'-phosphoryl)serine).

The spectinabilin polyketide synthase complex is composed of 4 proteins, NorA, NorA', NorB and NorC. The complex comprises 6 modules with a total of 28 catalytic domains catalyzing 7 chain elongations. NorA comprises one module, NorA' two modules, NorB one module and NorC two modules. It depends on pantetheine 4'-phosphate as a cofactor.

It catalyses the reaction 4-nitrobenzoyl-CoA + 6 (S)-methylmalonyl-CoA + malonyl-CoA + 6 NADPH + 12 H(+) = demethyldeoxyspectinabilin + 7 CO2 + 6 NADP(+) + 8 CoA + 5 H2O. It participates in antibiotic biosynthesis. Its pathway is polyketide biosynthesis. Its function is as follows. Component of a type I modular polyketide synthase (PKS) that generates the backbone of the antibiotic spectinabilin (also known as neoaureothin), a nitroaryl-substituted polyketide metabolite. This PKS system accepts the unusual starter unit 4-nitrobenzoyl-CoA and extends it by 6 molecules of (S)-methylmalonyl-CoA and a single molecule of malonyl-CoA. In Streptomyces orinoci (Streptoverticillium orinoci), this protein is Spectinabilin polyketide synthase system protein NorB.